We begin with the raw amino-acid sequence, 494 residues long: MRIEMKNISKAFNGNPVLKNAQFMIETGEVHALMGENGAGKSTLMKILTGVYKRDGGTITIDGQERTFKNAKEAEEYGIAFIHQELNILPNLTVAENMFLGKELMYGKTGILRTRQMNAIAQQQLAELGLHVKGAMLAGELSVGQQQIIEIAKALMTNASVIIMDEPTAALTDREIETLFTVINKLRKEGVSFVYISHRMEEIFSICDAITILRDGEYVGKRSIPETSFDEVVSMMVGRSIGERYPERNSQISDVIFEMRNGTKKGKFENVSFQVRKGEILGVAGLMGAGRTDIMKSIFGYEPLDSGQIFINGQEVKIDSPIDAIRQRIAFITEDRKSEGLVLDFSIRENLALPNLESLSKGSVLSNELEQQFTADMMKLLNVKASSGEQAVKSLSGGNQQKVVIAKWLGIHPQLLILDEPTRGVDVGAKKEIYSIMNKLTEEGDAVIMVSSELPEVLGMSDRVLVIHEGKVGGILEKDEASQESIMALATGGE.

ABC transporter domains follow at residues 3 to 240 (IEMK…VGRS) and 250 to 494 (SQIS…TGGE). Residue 35-42 (GENGAGKS) participates in ATP binding.

It belongs to the ABC transporter superfamily. Ribose importer (TC 3.A.1.2.1) family. In terms of assembly, the complex is composed of an ATP-binding protein (RbsA), two transmembrane proteins (RbsC) and a solute-binding protein (RbsB).

Its subcellular location is the cell membrane. The enzyme catalyses D-ribose(out) + ATP + H2O = D-ribose(in) + ADP + phosphate + H(+). Its function is as follows. Part of the ABC transporter complex RbsABC involved in ribose import. Responsible for energy coupling to the transport system. The polypeptide is Ribose import ATP-binding protein RbsA (Bacillus cereus (strain ZK / E33L)).